The sequence spans 324 residues: Calmodulin-like protein 12 (324 aa).

EF-hand domains lie at 8–43 (DQIT…IGEK), 44–79 (PTKA…NQGH), 97–132 (DQIT…LGKN), 133–168 (RTKA…NQGH), 187–222 (DQIL…LGET), and 223–258 (QTKA…KMID). Positions 21, 23, 25, 27, 32, 57, 59, 61, 63, 68, 110, 112, 114, 116, 121, 146, 148, 150, 152, 157, 200, 202, 204, 206, 211, 236, 238, 240, 242, and 247 each coordinate Ca(2+).

It belongs to the calmodulin family. In terms of assembly, interacts with PID. Binds to ABCG36.

Its function is as follows. Potential calcium sensor that binds calcium in vitro. This is Calmodulin-like protein 12 from Arabidopsis thaliana (Mouse-ear cress).